The primary structure comprises 483 residues: Altronate oxidoreductase (483 aa).

Residue 18–29 (IIQFGEGNFLRA) participates in NAD(+) binding.

This sequence belongs to the mannitol dehydrogenase family. UxaB subfamily.

It catalyses the reaction D-altronate + NAD(+) = keto-D-tagaturonate + NADH + H(+). It functions in the pathway carbohydrate metabolism; pentose and glucuronate interconversion. This is Altronate oxidoreductase (uxaB) from Shigella flexneri.